Consider the following 220-residue polypeptide: METDRQGSESGACDGCCSDCSDEGTQSQQPTIFTDTRASLARRDYAKLLASVGGLTAVASLTAPLAGLTRVFEREYTGPVYSDGIYLVDGDGNRIEEKALSEGEKMTVFPEPRPGIEKAPTLLVRHAEDAYSDAVKTEYMVAGYTAYSKVCTHAGCMVSNEEDGTLVCPCHFGKFDPTDGAAVVGGPPSRALPQLPITVSSEGYLIATGDFNGPVGPGGD.

A Rieske domain is found at 118 to 206 (KAPTLLVRHA…ITVSSEGYLI (89 aa)). 4 residues coordinate [2Fe-2S] cluster: C151, H153, C168, and H171. C156 and C170 are oxidised to a cystine.

Probable multiprotein complex; a catalytic heterodimer of an alpha and beta chain is proposed to associate with additional subunits involved in membrane attachment and electron transfer. [2Fe-2S] cluster is required as a cofactor.

Its subcellular location is the cell membrane. Its function is as follows. The respiratory membrane-bound nitrate reductase enzyme complex plays a role in generation of metabolic energy by using nitrate as a terminal electron acceptor during anaerobic conditions. Proposed Rieske subunit involved in a protonmotive Q-cycle mechanism-based electron transfer electrons to the beta subunit. The protein is Putative respiratory nitrate reductase subunit Rieske (narB) of Haloferax mediterranei (strain ATCC 33500 / DSM 1411 / JCM 8866 / NBRC 14739 / NCIMB 2177 / R-4) (Halobacterium mediterranei).